Here is a 339-residue protein sequence, read N- to C-terminus: Methyltransferase ptaI (339 aa).

Belongs to the methyltransferase superfamily.

The protein operates within secondary metabolite biosynthesis. In terms of biological role, methyltransferase; part of the gene cluster that mediates the biosynthesis of pestheic acid, a diphenyl ether which is a biosynthetic precursor of the unique chloropupukeananes. The biosynthesis initiates from condensation of acetate and malonate units catalyzed by the non-reducing PKS ptaA. As the ptaA protein is TE/CLC domain-deficient, hydrolysis and Claisen cyclization of the polyketide could be catalyzed by ptaB containing a beta-lactamase domain. The ptaB protein might hydrolyze the thioester bond between the ACP of ptaA and the intermediate to release atrochrysone carboxylic acid, which is spontaneously dehydrated to form endocrocin anthrone. Endocrocin anthrone is then converted to endocrocin, catalyzed by the anthrone oxygenase ptaC. Spontaneous decarboxylation of endocrocin occurs to generate emodin. An O-methyltransferase (ptaH or ptaI) could methylate emodin to form physcion. PtaJ could then catalyze the oxidative cleavage of physcion, and rotation of the intermediate could then afford desmethylisosulochrin. PtaF, a putative NADH-dependent oxidoreductase, might also participate in the oxidative cleavage step. Desmethylisosulochrin is then transformed by another O-methyltransferase (ptaH or ptaI) to form isosulochrin. Chlorination of isosulochrin by ptaM in the cyclohexadienone B ring then produces chloroisosulochrin. PtaE is responsible for the oxidative coupling reactions of both benzophenones isosulouchrin and chloroisosulochrin to RES-1214-1 and pestheic acid respectively, regardless of chlorination. In Pestalotiopsis fici (strain W106-1 / CGMCC3.15140), this protein is Methyltransferase ptaI.